The following is a 2430-amino-acid chain: Protein TASOR 2 (2430 aa).

A phosphoserine mark is found at Ser19, Ser219, and Ser384. Disordered regions lie at residues 416–488 and 577–648; these read LDRK…GETA and RGTS…SQSS. The residue at position 685 (Ser685) is a Phosphoserine. Positions 704-727 are disordered; that stretch reads LLLQQKPPDDPVVKPKDRPPSARV. Positions 710 to 723 are enriched in basic and acidic residues; it reads PPDDPVVKPKDRPP. Phosphoserine is present on residues Ser1025, Ser1087, and Ser1172. The interval 1331 to 1360 is disordered; the sequence is LTESREVSSADNVSVYPSVSEEPVENKERK. Ser1541 carries the phosphoserine modification. Positions 1700 to 1727 are disordered; the sequence is EAELHKETTGPGTAGPQSNTTSSLKGER. Residues 1714–1723 are compositionally biased toward polar residues; sequence GPQSNTTSSL. Ser1848 is subject to Phosphoserine. Lys2007 participates in a covalent cross-link: Glycyl lysine isopeptide (Lys-Gly) (interchain with G-Cter in SUMO2). 4 positions are modified to phosphoserine: Ser2009, Ser2037, Ser2062, and Ser2066. The segment at 2046–2069 is disordered; it reads SDPRPQGQPRRGYTASSLDSSSSW.

It belongs to the TASOR family.

The chain is Protein TASOR 2 from Homo sapiens (Human).